A 589-amino-acid chain; its full sequence is Deoxynucleoside triphosphate triphosphohydrolase SAMHD1 (589 aa).

Position 1 is an N-acetylmethionine (M1). The segment covering 1-10 (MQSADSQNTP) has biased composition (polar residues). The tract at residues 1 to 41 (MQSADSQNTPKRPRRDGSPRTPPDSPLADAETSPSHDLDPD) is disordered. S18 bears the Phosphoserine mark. T21 bears the Phosphothreonine mark. Phosphoserine is present on residues S33 and S88. The SAM domain occupies 45–100 (WGPEQVWSFLRRCGFSDSELLKRCREKRMSGSLLPFPEDLGISSHGKKMKLLNCIQ). GTP-binding residues include K104 and V105. Residue N107 coordinates dGTP. D125, Q130, and R133 together coordinate GTP. Q137, L138, V144, and R152 together coordinate dGTP. Q137 serves as a coordination point for dATP. A dCTP-binding site is contributed by Q137. Q137 contributes to the dTTP binding site. A dATP-binding site is contributed by R152. R152 serves as a coordination point for dCTP. R152 contributes to the dTTP binding site. The HD domain maps to 152–277 (RFEHSLGVGY…IKDASKWLYK (126 aa)). Residues H155, H194, and D195 each coordinate Mn(2+). Residues H198 and H203 each contribute to the dATP site. The dCTP site is built by H198 and H203. DTTP is bound by residues H198 and H203. The active site involves H221. Mn(2+) is bound at residue D300. DGTP is bound by residues K301, Y304, D308, R322, R341, K343, N347, R355, Y363, Q364, H365, and K366. 3 residues coordinate dATP: K301, Y304, and D308. DCTP-binding residues include K301, Y304, and D308. K301, Y304, and D308 together coordinate dTTP. R355 is a dATP binding site. R355 is a binding site for dCTP. Q364 is a dATP binding site. Q364 is a dCTP binding site. Residue Q364 coordinates dTTP. GTP contacts are provided by R440 and K444. K457 is covalently cross-linked (Glycyl lysine isopeptide (Lys-Gly) (interchain with G-Cter in SUMO2)). Position 512 (K512) interacts with GTP. K512 is a binding site for dGTP.

Belongs to the SAMHD1 family. In terms of assembly, homodimer; in absence of GTP and dNTP. Homotetramer; in GTP- and dNTP-bound form. Interacts with MRE11; leading to stimulate the exonuclease activity of MRE11. Interacts with RBBP8/CtIP. Interacts (via its C-terminus) with CD81. Requires Zn(2+) as cofactor.

It localises to the nucleus. The protein localises to the chromosome. The catalysed reaction is a 2'-deoxyribonucleoside 5'-triphosphate + H2O = a 2'-deoxyribonucleoside + triphosphate + H(+). It catalyses the reaction dATP + H2O = 2'-deoxyadenosine + triphosphate + H(+). It carries out the reaction dCTP + H2O = 2'-deoxycytidine + triphosphate + H(+). The enzyme catalyses dGTP + H2O = 2'-deoxyguanosine + triphosphate + H(+). The catalysed reaction is dTTP + H2O = thymidine + triphosphate + H(+). Its activity is regulated as follows. Allosterically activated and regulated via the combined actions of GTP and dNTPs (dATP, dGTP, dTTP and dCTP): Allosteric site 1 binds GTP, while allosteric site 2 binds dNTP. Allosteric activation promotes the formation of highly active homotetramers. In terms of biological role, protein that acts both as a host restriction factor involved in defense response to virus and as a regulator of DNA end resection at stalled replication forks. Has deoxynucleoside triphosphate (dNTPase) activity, which is required to restrict infection by viruses: dNTPase activity reduces cellular dNTP levels to levels too low for retroviral reverse transcription to occur, blocking early-stage virus replication in dendritic and other myeloid cells. Likewise, suppresses LINE-1 retrotransposon activity. In addition to virus restriction, dNTPase activity acts as a regulator of DNA precursor pools by regulating dNTP pools. Functions during S phase at stalled DNA replication forks to promote the resection of gapped or reversed forks: acts by stimulating the exonuclease activity of MRE11, activating the ATR-CHK1 pathway and allowing the forks to restart replication. Its ability to promote degradation of nascent DNA at stalled replication forks is required to prevent induction of type I interferons, thereby preventing chronic inflammation. Ability to promote DNA end resection at stalled replication forks is independent of dNTPase activity. Enhances immunoglobulin hypermutation in B-lymphocytes by promoting transversion mutation. In Bos taurus (Bovine), this protein is Deoxynucleoside triphosphate triphosphohydrolase SAMHD1.